The following is a 349-amino-acid chain: Bifunctional nitrilase/nitrile hydratase NIT4A (349 aa).

The 273-residue stretch at 29–301 folds into the CN hydrolase domain; sequence VRATVVQAST…EALISADLDL (273 aa). Glutamate 69 serves as the catalytic Proton acceptor. Residue lysine 156 is part of the active site. Catalysis depends on cysteine 190, which acts as the Nucleophile.

This sequence belongs to the carbon-nitrogen hydrolase superfamily. Nitrilase family. As to expression, ubiquitous.

It catalyses the reaction L-asparagine = 3-cyano-L-alanine + H2O. It carries out the reaction 3-cyano-L-alanine + 2 H2O = L-aspartate + NH4(+). Its function is as follows. Involved in the cyanide detoxification pathway. Has nitrilase and nitrile-hydratase activity in the ratio 4.0:1, producing both asparagine and aspartic acid from beta-cyano-L-alanine (Ala(CN)). Can also use 3-phenylpropionitrile as substrate, but not indole-3-acetonitrile. This is Bifunctional nitrilase/nitrile hydratase NIT4A (NIT4A) from Lupinus angustifolius (Narrow-leaved blue lupine).